We begin with the raw amino-acid sequence, 817 residues long: Leucine--tRNA ligase (817 aa).

Residues 42–52 (PYPSGRLHMGH) carry the 'HIGH' region motif. The 'KMSKS' region motif lies at 576–580 (KMSKS). Residue lysine 579 coordinates ATP.

This sequence belongs to the class-I aminoacyl-tRNA synthetase family.

It is found in the cytoplasm. The catalysed reaction is tRNA(Leu) + L-leucine + ATP = L-leucyl-tRNA(Leu) + AMP + diphosphate. This Thioalkalivibrio sulfidiphilus (strain HL-EbGR7) protein is Leucine--tRNA ligase.